A 390-amino-acid polypeptide reads, in one-letter code: Phosphopentomutase (390 aa).

Asp12, Asp284, His289, Asp325, His326, and His337 together coordinate Mn(2+).

The protein belongs to the phosphopentomutase family. The cofactor is Mn(2+).

It is found in the cytoplasm. It carries out the reaction 2-deoxy-alpha-D-ribose 1-phosphate = 2-deoxy-D-ribose 5-phosphate. It catalyses the reaction alpha-D-ribose 1-phosphate = D-ribose 5-phosphate. Its pathway is carbohydrate degradation; 2-deoxy-D-ribose 1-phosphate degradation; D-glyceraldehyde 3-phosphate and acetaldehyde from 2-deoxy-alpha-D-ribose 1-phosphate: step 1/2. Isomerase that catalyzes the conversion of deoxy-ribose 1-phosphate (dRib-1-P) and ribose 1-phosphate (Rib-1-P) to deoxy-ribose 5-phosphate (dRib-5-P) and ribose 5-phosphate (Rib-5-P), respectively. The polypeptide is Phosphopentomutase (Macrococcus caseolyticus (strain JCSC5402) (Macrococcoides caseolyticum)).